The primary structure comprises 115 residues: Large ribosomal subunit protein bL20 (115 aa).

The protein belongs to the bacterial ribosomal protein bL20 family.

In terms of biological role, binds directly to 23S ribosomal RNA and is necessary for the in vitro assembly process of the 50S ribosomal subunit. It is not involved in the protein synthesizing functions of that subunit. In Prochlorococcus marinus (strain MIT 9515), this protein is Large ribosomal subunit protein bL20.